The primary structure comprises 792 residues: Phenylalanine--tRNA ligase beta subunit (792 aa).

The tRNA-binding domain occupies 39 to 147 (ARTLEKVVVG…ADAPIGKNIQ (109 aa)). Residues 400 to 475 (PKIPRIILRP…HLYGYDRIPQ (76 aa)) form the B5 domain. Mg(2+)-binding residues include D453, D459, E462, and E463. One can recognise an FDX-ACB domain in the interval 697 to 791 (SKFPSIRRDI…LERKFNAKLR (95 aa)).

The protein belongs to the phenylalanyl-tRNA synthetase beta subunit family. Type 1 subfamily. As to quaternary structure, tetramer of two alpha and two beta subunits. Mg(2+) serves as cofactor.

The protein resides in the cytoplasm. The catalysed reaction is tRNA(Phe) + L-phenylalanine + ATP = L-phenylalanyl-tRNA(Phe) + AMP + diphosphate + H(+). This chain is Phenylalanine--tRNA ligase beta subunit, found in Coxiella burnetii (strain RSA 493 / Nine Mile phase I).